The primary structure comprises 46 residues: Endochitinase 3 (46 aa).

A disordered region spans residues 1 to 21 (MTPQGNKPSSHDVITGRWTPS).

Belongs to the glycosyl hydrolase 19 family. Chitinase class I subfamily.

It catalyses the reaction Random endo-hydrolysis of N-acetyl-beta-D-glucosaminide (1-&gt;4)-beta-linkages in chitin and chitodextrins.. Its function is as follows. Defense against chitin-containing fungal and bacterial pathogens. This chain is Endochitinase 3, found in Arachis hypogaea (Peanut).